A 22-amino-acid chain; its full sequence is SAALAGTIIDGASLGFDILNKV.

Residues 3–12 are plays an important role in the hemolytic activity; sequence ALAGTIIDGA. The segment at 11-22 is N-terminal region; the sequence is GASLGFDILNKV.

This sequence belongs to the actinoporin family. Sea anemone subfamily. In terms of assembly, octamer or nonamer in membranes. Monomer in the soluble state.

The protein resides in the secreted. Its subcellular location is the nematocyst. It localises to the target cell membrane. In terms of biological role, pore-forming protein that forms cations-selective hydrophilic pores of around 1 nm and causes cytolysis. Pore formation is a multi-step process that involves specific recognition of membrane sphingomyelin (but neither cholesterol nor phosphatidylcholine) using aromatic rich region and adjacent phosphocholine (POC) binding site, firm binding to the membrane (mainly driven by hydrophobic interactions) accompanied by the transfer of the N-terminal region to the lipid-water interface and finally pore formation after oligomerization of monomers. The polypeptide is Magnificalysin II (Heteractis magnifica (Magnificent sea anemone)).